The sequence spans 57 residues: Lantibiotic nisin-Z (57 aa).

Positions 1–23 (MSTKDFNLDLVSVSKKDSGASPR) are excised as a propeptide. At Thr25 the chain carries 2,3-didehydrobutyrine. The segment at residues 26–30 (SISLC) is a cross-link (lanthionine (Ser-Cys)). Ser28 is modified (2,3-didehydroalanine (Ser)). 4 consecutive cross-links (beta-methyllanthionine (Thr-Cys)) follow at residues 31–34 (TPGC), 36–42 (TGALMGC), 46–49 (TATC), and 48–51 (TCNC). Ser56 is subject to 2,3-didehydroalanine (Ser).

Belongs to the type A lantibiotic family. In terms of processing, maturation of lantibiotics involves the enzymatic conversion of Thr, and Ser into dehydrated AA and the formation of thioether bonds with cysteine. This is followed by membrane translocation and cleavage of the modified precursor. The structure of the 2,3-didehydrobutyrine is not discussed in PubMed:15361862. It is probably the Z-isomer by similarity.

In terms of biological role, lanthionine-containing peptide antibiotic (lantibiotic) active on Gram-positive bacteria. The bactericidal activity of lantibiotics is based on depolarization of energized bacterial cytoplasmic membranes, initiated by the formation of aqueous transmembrane pores. The protein is Lantibiotic nisin-Z (nisZ) of Lactococcus lactis subsp. lactis (Streptococcus lactis).